Reading from the N-terminus, the 273-residue chain is Secretory carrier-associated membrane protein 6 (273 aa).

Residues 1–69 are disordered; sequence MHHDPNPFDE…MGDSKSKARE (69 aa). At 1-131 the chain is on the cytoplasmic side; the sequence is MHHDPNPFDE…LQKLQYLAFA (131 aa). Over residues 20–30 the composition is skewed to gly residues; sequence NGGGGGGGGGS. The stretch at 68–94 forms a coiled coil; sequence RELSSWETDLKRREADIKRREEALRNA. The next 4 helical transmembrane spans lie at 132-152, 159-179, 194-214, and 239-259; these read SWLG…VCWI, LFFL…LIWY, FGWF…AAIA, and IIGI…LLSI. Over 260–273 the chain is Cytoplasmic; that stretch reads GVLQRVYMYFRGNK.

The protein belongs to the SCAMP family.

It localises to the cell membrane. It is found in the cytoplasmic vesicle. The protein resides in the secretory vesicle membrane. Probably involved in membrane trafficking. In Oryza sativa subsp. japonica (Rice), this protein is Secretory carrier-associated membrane protein 6 (SCAMP6).